The following is a 785-amino-acid chain: MSSAKTFTKHISFDDLAPSLIDDQATIIKNDSHHVGLNNHFLHIPPQFNPVYKNTLTGSHGSNDLATDESLDSPEDEEASSPLQLGTPTSTTSGVPHFYTQVFSPAAHDPSKSYLRSPSVERSRSESPMFRSRRRTSVRLPPPPKVSVLKKSRKAADEQGPIDDIDIGDLDFELERKMTKMTERNTQKNSGSRKGYTQAAFANLNEVEDRIETKSMVDLSESENMESSKKRSKSFAGMTDEELAKLEEFYISKGRSNKTKIDQFDFGEQVPVYLNTTESKTDSSNVTDPLAAIYPSRPTIVHNAISMTIDHPDYENYISNTKEKLNCKDKDDDVDLRVVSCYISGRRYTWSSVDWYVENLTRNGDHLVIITTIPEFEAKIDTLAYKEKRRHRLERMTSNTSESMTTASHSLIGPDLSSPLSTGIRIEAIHNEAKQTCSDILNYYARRLATKIVRISIEMVKENSTRSAIISATSLYRPSLQVISTVSANIQIKFRNGKVKLPFFLMKHFAMPAFVVPFEFIKPELLIKPRVDKDEQDNSDDLKTEVRKKERLQWLSALIRRTLENPFTKHKVVDSDDEESDSDESVTSVNEYFPISPEKKEEMEFFDKMGYVRPKPSRQVLLDDNTLMKYDSSGRKLTPIESRNSRRSSKRSSRIQFNNNGIYKVKSMVDDIYNHETASTPHIKTALKWDNEDPKMKFTSHPMRKTKSAGLSPRTSSTSSSSGQRKAHHHHHHHNHVSRTKTTESTKSGNSKKDSSSSSTNDHQFKRSEKKKKSKFGSIFKKVFG.

Residues 53–65 (KNTLTGSHGSNDL) are compositionally biased toward polar residues. The tract at residues 53-162 (KNTLTGSHGS…RKAADEQGPI (110 aa)) is disordered. The span at 66-79 (ATDESLDSPEDEEA) shows a compositional bias: acidic residues. Positions 81–94 (SPLQLGTPTSTTSG) are enriched in polar residues. Residue Ser215 is modified to Phosphoserine. Disordered regions lie at residues 571-590 (KVVD…TSVN) and 631-657 (DSSG…RIQF). The segment covering 575–584 (SDDEESDSDE) has biased composition (acidic residues). Ser667 is subject to Phosphoserine. A disordered region spans residues 693 to 785 (DPKMKFTSHP…FGSIFKKVFG (93 aa)). A compositionally biased stretch (basic residues) spans 725 to 739 (RKAHHHHHHHNHVSR). Residues 776–785 (FGSIFKKVFG) show a composition bias toward low complexity.

This is an uncharacterized protein from Saccharomyces cerevisiae (strain ATCC 204508 / S288c) (Baker's yeast).